The following is a 463-amino-acid chain: Maintenance of mitochondrial morphology protein 1-2 (463 aa).

Over 1-23 (MVIPAELIQKALKQQSGWGFTEG) the chain is Lumenal. A helical transmembrane segment spans residues 24-44 (LVLGQLSVIITVIIILKFVIF). The Cytoplasmic segment spans residues 45-463 (AENKSPKKGN…TGADTASGSS (419 aa)). Residues 72 to 152 (GGQTANGVKT…VAGSTSNLAV (81 aa)) are disordered. Positions 108 to 122 (RPGSSRVSMVRSTSG) are enriched in polar residues. In terms of domain architecture, SMP-LTD spans 205 to 435 (APESLDWFNV…EPHQMIFILP (231 aa)).

The protein belongs to the MMM1 family. As to quaternary structure, homodimer. Component of the ER-mitochondria encounter structure (ERMES) or MDM complex, composed of MMM1, MDM10, MDM12 and MDM34. An MMM1 homodimer associates with one molecule of MDM12 on each side in a pairwise head-to-tail manner, and the SMP-LTD domains of MMM1 and MDM12 generate a continuous hydrophobic tunnel for phospholipid trafficking.

The protein localises to the endoplasmic reticulum membrane. Its function is as follows. Component of the ERMES/MDM complex, which serves as a molecular tether to connect the endoplasmic reticulum (ER) and mitochondria. Components of this complex are involved in the control of mitochondrial shape and protein biogenesis, and function in nonvesicular lipid trafficking between the ER and mitochondria. The MDM12-MMM1 subcomplex functions in the major beta-barrel assembly pathway that is responsible for biogenesis of all outer membrane beta-barrel proteins, and acts in a late step after the SAM complex. The MDM10-MDM12-MMM1 subcomplex further acts in the TOM40-specific pathway after the action of the MDM12-MMM1 complex. Essential for establishing and maintaining the structure of mitochondria and maintenance of mtDNA nucleoids. The chain is Maintenance of mitochondrial morphology protein 1-2 from Yarrowia lipolytica (strain CLIB 122 / E 150) (Yeast).